A 467-amino-acid chain; its full sequence is Glutamate--tRNA ligase (467 aa).

Positions proline 9–glycine 19 match the 'HIGH' region motif. The short motif at lysine 241 to arginine 245 is the 'KMSKS' region element. Lysine 244 provides a ligand contact to ATP.

The protein belongs to the class-I aminoacyl-tRNA synthetase family. Glutamate--tRNA ligase type 1 subfamily. In terms of assembly, monomer.

The protein resides in the cytoplasm. The catalysed reaction is tRNA(Glu) + L-glutamate + ATP = L-glutamyl-tRNA(Glu) + AMP + diphosphate. In terms of biological role, catalyzes the attachment of glutamate to tRNA(Glu) in a two-step reaction: glutamate is first activated by ATP to form Glu-AMP and then transferred to the acceptor end of tRNA(Glu). This chain is Glutamate--tRNA ligase, found in Methylobacillus flagellatus (strain ATCC 51484 / DSM 6875 / VKM B-1610 / KT).